Consider the following 248-residue polypeptide: Ubiquinone/menaquinone biosynthesis C-methyltransferase UbiE (248 aa).

S-adenosyl-L-methionine contacts are provided by S68 and D92.

It belongs to the class I-like SAM-binding methyltransferase superfamily. MenG/UbiE family.

It catalyses the reaction a 2-demethylmenaquinol + S-adenosyl-L-methionine = a menaquinol + S-adenosyl-L-homocysteine + H(+). The enzyme catalyses a 2-methoxy-6-(all-trans-polyprenyl)benzene-1,4-diol + S-adenosyl-L-methionine = a 5-methoxy-2-methyl-3-(all-trans-polyprenyl)benzene-1,4-diol + S-adenosyl-L-homocysteine + H(+). It participates in quinol/quinone metabolism; menaquinone biosynthesis; menaquinol from 1,4-dihydroxy-2-naphthoate: step 2/2. It functions in the pathway cofactor biosynthesis; ubiquinone biosynthesis. Functionally, methyltransferase required for the conversion of demethylmenaquinol (DMKH2) to menaquinol (MKH2) and the conversion of 2-polyprenyl-6-methoxy-1,4-benzoquinol (DDMQH2) to 2-polyprenyl-3-methyl-6-methoxy-1,4-benzoquinol (DMQH2). This is Ubiquinone/menaquinone biosynthesis C-methyltransferase UbiE from Rickettsia conorii (strain ATCC VR-613 / Malish 7).